A 478-amino-acid polypeptide reads, in one-letter code: 3-isopropylmalate dehydratase large subunit (478 aa).

3 residues coordinate [4Fe-4S] cluster: Cys-347, Cys-407, and Cys-410.

This sequence belongs to the aconitase/IPM isomerase family. LeuC type 1 subfamily. Heterodimer of LeuC and LeuD. The cofactor is [4Fe-4S] cluster.

It carries out the reaction (2R,3S)-3-isopropylmalate = (2S)-2-isopropylmalate. Its pathway is amino-acid biosynthesis; L-leucine biosynthesis; L-leucine from 3-methyl-2-oxobutanoate: step 2/4. Functionally, catalyzes the isomerization between 2-isopropylmalate and 3-isopropylmalate, via the formation of 2-isopropylmaleate. The sequence is that of 3-isopropylmalate dehydratase large subunit from Prochlorococcus marinus (strain MIT 9313).